The sequence spans 373 residues: ATP phosphoribosyltransferase regulatory subunit (373 aa).

It belongs to the class-II aminoacyl-tRNA synthetase family. HisZ subfamily. In terms of assembly, heteromultimer composed of HisG and HisZ subunits.

Its subcellular location is the cytoplasm. It functions in the pathway amino-acid biosynthesis; L-histidine biosynthesis; L-histidine from 5-phospho-alpha-D-ribose 1-diphosphate: step 1/9. Required for the first step of histidine biosynthesis. May allow the feedback regulation of ATP phosphoribosyltransferase activity by histidine. This Rhizobium leguminosarum bv. trifolii (strain WSM2304) protein is ATP phosphoribosyltransferase regulatory subunit.